We begin with the raw amino-acid sequence, 190 residues long: dTTP/UTP pyrophosphatase (190 aa).

The Proton acceptor role is filled by Asp70.

Belongs to the Maf family. YhdE subfamily. A divalent metal cation is required as a cofactor.

The protein resides in the cytoplasm. The enzyme catalyses dTTP + H2O = dTMP + diphosphate + H(+). It catalyses the reaction UTP + H2O = UMP + diphosphate + H(+). Its function is as follows. Nucleoside triphosphate pyrophosphatase that hydrolyzes dTTP and UTP. May have a dual role in cell division arrest and in preventing the incorporation of modified nucleotides into cellular nucleic acids. This chain is dTTP/UTP pyrophosphatase, found in Gloeobacter violaceus (strain ATCC 29082 / PCC 7421).